Consider the following 167-residue polypeptide: 2-amino-4-hydroxy-6-hydroxymethyldihydropteridine pyrophosphokinase (167 aa).

It belongs to the HPPK family.

The enzyme catalyses 6-hydroxymethyl-7,8-dihydropterin + ATP = (7,8-dihydropterin-6-yl)methyl diphosphate + AMP + H(+). It functions in the pathway cofactor biosynthesis; tetrahydrofolate biosynthesis; 2-amino-4-hydroxy-6-hydroxymethyl-7,8-dihydropteridine diphosphate from 7,8-dihydroneopterin triphosphate: step 4/4. Functionally, catalyzes the transfer of pyrophosphate from adenosine triphosphate (ATP) to 6-hydroxymethyl-7,8-dihydropterin, an enzymatic step in folate biosynthesis pathway. This chain is 2-amino-4-hydroxy-6-hydroxymethyldihydropteridine pyrophosphokinase (folK), found in Bacillus subtilis (strain 168).